Here is a 380-residue protein sequence, read N- to C-terminus: Apolipoprotein A-IV (380 aa).

The signal sequence occupies residues 1–20; that stretch reads MFLKAVVLSLALVAVTGAEA. Tandem repeats lie at residues 33 to 54, 60 to 81, 82 to 103, 115 to 136, 137 to 158, 159 to 180, 181 to 202, 203 to 224, 225 to 246, 247 to 268, 269 to 286, 287 to 308, and 309 to 330. Residues 33–330 form a 13 X 22 AA approximate tandem repeats region; sequence DYFSQLGNNA…QLDTLRQKLG (298 aa). Residues 361 to 380 form a disordered region; that stretch reads KESQAPALPAQEEMPVPLGG.

Belongs to the apolipoprotein A1/A4/E family. In terms of assembly, homodimer. In terms of tissue distribution, secreted in plasma.

The protein resides in the secreted. Its function is as follows. May have a role in chylomicrons and VLDL secretion and catabolism. Required for efficient activation of lipoprotein lipase by ApoC-II; potent activator of LCAT. Apoa-IV is a major component of HDL and chylomicrons. In Bos taurus (Bovine), this protein is Apolipoprotein A-IV (APOA4).